Reading from the N-terminus, the 378-residue chain is MGQSKKLNKQPSSLSPLVQLAGIRKCFDGKEVIPQLDLTINNGEFLTLLGPSGCGKTTVLRLIAGLETVDSGRIMLDNEDITHVPAENRYVNTVFQSYALFPHMTVFENVAFGLRMQKTPAAEITPRVMEALRMVQLETFAQRKPHQLSGGQQQRVAIARAVVNKPRLLLLDESLSALDYKLRKQMQNELKALQRKLGITFVFVTHDQEEALTMSDRIVMMRDGRIEQDGTPRDIYEEPKNLFVTGFIAEIHMFNATVIERLDEQRVRANVEGRECNIYVNFAVEPGQKLHVLLRPEDLRVEEINDDNHAEGLIGYVRERNYKGMTLESVVELENGKMVMVSEFFNEDDPDFDHSLDQKMAINWVESWEVVLADEEHK.

The ABC transporter domain maps to 18–248 (VQLAGIRKCF…PKNLFVTGFI (231 aa)). 50–57 (GPSGCGKT) serves as a coordination point for ATP.

It belongs to the ABC transporter superfamily. Spermidine/putrescine importer (TC 3.A.1.11.1) family. The complex is composed of two ATP-binding proteins (PotA), two transmembrane proteins (PotB and PotC) and a solute-binding protein (PotD).

The protein localises to the cell inner membrane. It carries out the reaction ATP + H2O + polyamine-[polyamine-binding protein]Side 1 = ADP + phosphate + polyamineSide 2 + [polyamine-binding protein]Side 1.. Functionally, part of the ABC transporter complex PotABCD involved in spermidine/putrescine import. Responsible for energy coupling to the transport system. This is Spermidine/putrescine import ATP-binding protein PotA from Shigella flexneri serotype 5b (strain 8401).